The following is a 429-amino-acid chain: MVSKKQKFLTVILVIVLAIVIVGGVFGISFVKGRVTFPWQLQNSEAKTEQVKEPAKEEPKLVIKEKKQDESAKKEQELKKAKEEAEAAVEKETEKTEEEPVDNLLNDMKLKYYGKLAVEGSHLVDADGHEVLLMGVSTHGINWYPEYASAETIKSLRDTWGINVIRLAMYTSDYNGYCVAGKENQEKLKDIIDDAVEAATDNDMYVIIDWHTLNDADPNEYKADAIQFFGEMVRKYKDNENVIYEICNEPNGDTTWNDVRRYANEVIPVIRNVDAIILVGTPKWATDLDSVLDKPLDFDNIMYTYHFYAGTHHKAERNALRDALDEGLPVFISEYGLVDADGDGNLNEKEADYWYDMIRKEYGVSSCMWNLSNKDEGSAMINADCDKLSDFTEEDLSESAMWLIDQISQLKHSDLEQGVDWITPENNNR.

The signal sequence occupies residues 1–34 (MVSKKQKFLTVILVIVLAIVIVGGVFGISFVKGR). The segment covering 46–94 (AKTEQVKEPAKEEPKLVIKEKKQDESAKKEQELKKAKEEAEAAVEKETE) has biased composition (basic and acidic residues). A disordered region spans residues 46-100 (AKTEQVKEPAKEEPKLVIKEKKQDESAKKEQELKKAKEEAEAAVEKETEKTEEEP). Glu249 functions as the Proton donor in the catalytic mechanism. The active-site Nucleophile is Glu334.

The protein belongs to the glycosyl hydrolase 5 (cellulase A) family.

It catalyses the reaction Endohydrolysis of (1-&gt;4)-beta-D-glucosidic linkages in cellulose, lichenin and cereal beta-D-glucans.. This is Endoglucanase A (celA) from Butyrivibrio fibrisolvens.